The sequence spans 339 residues: Ketol-acid reductoisomerase (NADP(+)) (339 aa).

One can recognise a KARI N-terminal Rossmann domain in the interval 1–182; it reads MRVYYDRDAD…GGGRSGVIET (182 aa). Residues 24-27, Arg48, Ser51, Thr53, and 83-86 contribute to the NADP(+) site; these read YGSQ and DELQ. The active site involves His108. Residue Gly134 coordinates NADP(+). In terms of domain architecture, KARI C-terminal knotted spans 183-328; the sequence is TFKEECETDL…GKLRAMMPWI (146 aa). 4 residues coordinate Mg(2+): Asp191, Glu195, Glu227, and Glu231. Residue Ser252 coordinates substrate.

This sequence belongs to the ketol-acid reductoisomerase family. It depends on Mg(2+) as a cofactor.

The catalysed reaction is (2R)-2,3-dihydroxy-3-methylbutanoate + NADP(+) = (2S)-2-acetolactate + NADPH + H(+). It carries out the reaction (2R,3R)-2,3-dihydroxy-3-methylpentanoate + NADP(+) = (S)-2-ethyl-2-hydroxy-3-oxobutanoate + NADPH + H(+). It participates in amino-acid biosynthesis; L-isoleucine biosynthesis; L-isoleucine from 2-oxobutanoate: step 2/4. It functions in the pathway amino-acid biosynthesis; L-valine biosynthesis; L-valine from pyruvate: step 2/4. Functionally, involved in the biosynthesis of branched-chain amino acids (BCAA). Catalyzes an alkyl-migration followed by a ketol-acid reduction of (S)-2-acetolactate (S2AL) to yield (R)-2,3-dihydroxy-isovalerate. In the isomerase reaction, S2AL is rearranged via a Mg-dependent methyl migration to produce 3-hydroxy-3-methyl-2-ketobutyrate (HMKB). In the reductase reaction, this 2-ketoacid undergoes a metal-dependent reduction by NADPH to yield (R)-2,3-dihydroxy-isovalerate. The sequence is that of Ketol-acid reductoisomerase (NADP(+)) from Brucella abortus (strain S19).